The chain runs to 79 residues: Acyl carrier protein (79 aa).

Residues 2 to 77 (STIEERVKKI…QAIDYVKVHV (76 aa)) enclose the Carrier domain. The residue at position 37 (S37) is an O-(pantetheine 4'-phosphoryl)serine.

The protein belongs to the acyl carrier protein (ACP) family. Post-translationally, 4'-phosphopantetheine is transferred from CoA to a specific serine of apo-ACP by AcpS. This modification is essential for activity because fatty acids are bound in thioester linkage to the sulfhydryl of the prosthetic group.

The protein localises to the cytoplasm. It functions in the pathway lipid metabolism; fatty acid biosynthesis. Functionally, carrier of the growing fatty acid chain in fatty acid biosynthesis. The chain is Acyl carrier protein from Xanthomonas albilineans.